Reading from the N-terminus, the 291-residue chain is ATP synthase gamma chain (291 aa).

It belongs to the ATPase gamma chain family. In terms of assembly, F-type ATPases have 2 components, CF(1) - the catalytic core - and CF(0) - the membrane proton channel. CF(1) has five subunits: alpha(3), beta(3), gamma(1), delta(1), epsilon(1). CF(0) has three main subunits: a, b and c.

The protein resides in the cell inner membrane. Produces ATP from ADP in the presence of a proton gradient across the membrane. The gamma chain is believed to be important in regulating ATPase activity and the flow of protons through the CF(0) complex. The sequence is that of ATP synthase gamma chain from Burkholderia cenocepacia (strain ATCC BAA-245 / DSM 16553 / LMG 16656 / NCTC 13227 / J2315 / CF5610) (Burkholderia cepacia (strain J2315)).